The chain runs to 212 residues: MKYNIVHGICLLFAITQAVGAVHFYAKSGETKCFYEHLSRGNLLIGDLDLYVEKDGLFEEDPESSLTITVDETFDNDHRVLNQKNSHTGDVTFTALDTGEHRFCFTPFYSKKSATLRVFIELEIGNVEALDSKKKEDMNSLKGRVGQLTQRLSSIRKEQDAIREKEAEFRNQSESANSKIMTWSVFQLLILLGTCAFQLRYLKNFFVKQKVV.

Residues 1 to 20 (MKYNIVHGICLLFAITQAVG) form the signal peptide. Topologically, residues 21-178 (AVHFYAKSGE…FRNQSESANS (158 aa)) are lumenal. The 94-residue stretch at 31 to 124 (TKCFYEHLSR…TLRVFIELEI (94 aa)) folds into the GOLD domain. Asn171 is a glycosylation site (N-linked (GlcNAc...) asparagine). The helical transmembrane segment at 179-199 (KIMTWSVFQLLILLGTCAFQL) threads the bilayer. Residues 200–212 (RYLKNFFVKQKVV) lie on the Cytoplasmic side of the membrane.

This sequence belongs to the EMP24/GP25L family.

The protein localises to the endoplasmic reticulum membrane. Involved in vesicular protein trafficking. The polypeptide is Protein ERP5 (ERP5) (Saccharomyces cerevisiae (strain ATCC 204508 / S288c) (Baker's yeast)).